The following is a 26-amino-acid chain: Dermaseptin-J3 (26 aa).

V26 carries the post-translational modification Valine amide.

As to expression, expressed by the skin glands.

It is found in the secreted. Its function is as follows. Has antimicrobial activity. The polypeptide is Dermaseptin-J3 (Phasmahyla jandaia (Jandaia leaf frog)).